Consider the following 456-residue polypeptide: Tyrosine phenol-lyase (456 aa).

K257 is subject to N6-(pyridoxal phosphate)lysine.

Belongs to the beta-eliminating lyase family. In terms of assembly, homotetramer. The cofactor is pyridoxal 5'-phosphate. Contains L-DOPA (3',4'-dihydroxyphenylalanine).

It is found in the cytoplasm. It carries out the reaction L-tyrosine + H2O = phenol + pyruvate + NH4(+). The sequence is that of Tyrosine phenol-lyase (tpl) from Enterobacter agglomerans (Erwinia herbicola).